A 230-amino-acid polypeptide reads, in one-letter code: NADH dehydrogenase [ubiquinone] iron-sulfur protein 8, mitochondrial (230 aa).

The transit peptide at 1-42 (MAAILARKSLSALRSRQLVLAGQAWQQGANTSNGTLLGTRTF) directs the protein to the mitochondrion. 4Fe-4S ferredoxin-type domains follow at residues 122-151 (RRYP…IEAE) and 161-190 (TRYD…EGPN). Residues Cys-131, Cys-134, Cys-137, Cys-141, Cys-170, Cys-173, Cys-176, and Cys-180 each coordinate [4Fe-4S] cluster.

The protein belongs to the complex I 23 kDa subunit family. Complex I is composed of about 45 different subunits. This is a component of the iron-sulfur (IP) fragment of the enzyme. The cofactor is [4Fe-4S] cluster.

The protein resides in the mitochondrion. It carries out the reaction a ubiquinone + NADH + 5 H(+)(in) = a ubiquinol + NAD(+) + 4 H(+)(out). Functionally, core subunit of the mitochondrial membrane respiratory chain NADH dehydrogenase (Complex I) that is believed to belong to the minimal assembly required for catalysis. Complex I functions in the transfer of electrons from NADH to the respiratory chain. The immediate electron acceptor for the enzyme is believed to be ubiquinone. May donate electrons to ubiquinone. This Nicotiana tabacum (Common tobacco) protein is NADH dehydrogenase [ubiquinone] iron-sulfur protein 8, mitochondrial.